The chain runs to 179 residues: uncharacterized protein (179 aa).

2 disordered regions span residues 26-103 (LSAV…SYED) and 136-179 (KHKA…SWFN). Residues 34–61 (QQGKNEEQRQHDEWVAERNREIQQEKQR) are compositionally biased toward basic and acidic residues. Over residues 63-79 (ANAQAAANKRAATAAAN) the composition is skewed to low complexity. Basic and acidic residues-rich tracts occupy residues 82–103 (ARQD…SYED) and 158–179 (GGRD…SWFN).

This is an uncharacterized protein from Escherichia coli (strain K12).